Consider the following 367-residue polypeptide: Glutamate 5-kinase (367 aa).

Lys-10 serves as a coordination point for ATP. Substrate-binding residues include Ser-50, Asp-137, and Asn-149. Residues Thr-169–Asp-170 and Thr-211–Lys-217 contribute to the ATP site. The 79-residue stretch at Ala-275–Glu-353 folds into the PUA domain.

It belongs to the glutamate 5-kinase family.

It localises to the cytoplasm. It catalyses the reaction L-glutamate + ATP = L-glutamyl 5-phosphate + ADP. It participates in amino-acid biosynthesis; L-proline biosynthesis; L-glutamate 5-semialdehyde from L-glutamate: step 1/2. Functionally, catalyzes the transfer of a phosphate group to glutamate to form L-glutamate 5-phosphate. This is Glutamate 5-kinase from Cronobacter sakazakii (strain ATCC BAA-894) (Enterobacter sakazakii).